Reading from the N-terminus, the 561-residue chain is Potassium-transporting ATPase potassium-binding subunit (561 aa).

A run of 10 helical transmembrane segments spans residues 4–24, 65–85, 133–153, 177–197, 253–273, 285–305, 380–400, 417–437, 484–504, and 528–548; these read IVMQDAFFVVLLLVLAVPLGI, AVSVLAFSAVGFVFVMAVLML, IGLTVQNFVSAATGIAVLFAV, LYILLPLSLILALLLVSQGVV, FTNLIEMLAILLIPVALVVMF, AIMTAMMIVFVIGVVAITISE, GLYGMIGFIILTVFIAGLLVG, MVCLLILVPPLLTLFGTAVAV, MVGAVMMLLARFIPLVAALYL, and FIGLLIGVVVLVGALSFLPAL.

The protein belongs to the KdpA family. The system is composed of three essential subunits: KdpA, KdpB and KdpC.

It is found in the cell membrane. Its function is as follows. Part of the high-affinity ATP-driven potassium transport (or Kdp) system, which catalyzes the hydrolysis of ATP coupled with the electrogenic transport of potassium into the cytoplasm. This subunit binds the extracellular potassium ions and delivers the ions to the membrane domain of KdpB through an intramembrane tunnel. This chain is Potassium-transporting ATPase potassium-binding subunit, found in Listeria monocytogenes serotype 4b (strain F2365).